A 542-amino-acid chain; its full sequence is Beta-amylase 2, chloroplastic (542 aa).

The transit peptide at 1–55 directs the protein to the chloroplast; it reads MAIRLNHSVIPVSVKLGAPTRVSARSSLPFSVGDWRGVSTFSGARPLVLAKVKLR. Residues Asp136, His176, and Asp184 each coordinate substrate. Catalysis depends on Glu269, which acts as the Proton donor. Substrate contacts are provided by Lys377, His382, and Thr424. Catalysis depends on Glu465, which acts as the Proton acceptor. Residues 466 to 467 and Arg501 each bind substrate; that span reads NA.

The protein belongs to the glycosyl hydrolase 14 family.

The protein resides in the plastid. Its subcellular location is the chloroplast. The enzyme catalyses Hydrolysis of (1-&gt;4)-alpha-D-glucosidic linkages in polysaccharides so as to remove successive maltose units from the non-reducing ends of the chains.. Redox regulation; active in reducing conditions, inactive in oxidizing conditions. In terms of biological role, low beta-amylase activity. Interacts poorly with starch or other alpha-1,4-glucan. The protein is Beta-amylase 2, chloroplastic (BAM2) of Arabidopsis thaliana (Mouse-ear cress).